The chain runs to 139 residues: MTALLDVNVLIALGWPNHVHHAAAQRWFTQFSSNGWATTPITEAGYVRISSNRSVMQVSTTPAIAIAQLAAMTSLAGHTFWPDDVPLIVGSAGDRDAVSNHRRVTDCHLIALAARYGGRLVTFDAALADSASAGLVEVL.

Residues 4 to 133 enclose the PINc domain; that stretch reads LLDVNVLIAL…DAALADSASA (130 aa). Residues Asp6 and Asp106 each contribute to the Mg(2+) site.

Belongs to the PINc/VapC protein family. It depends on Mg(2+) as a cofactor.

In terms of biological role, toxic component of a type II toxin-antitoxin (TA) system. An RNase. Its toxic effect is neutralized by coexpression with cognate antitoxin VapB39. This chain is Ribonuclease VapC39, found in Mycobacterium tuberculosis (strain CDC 1551 / Oshkosh).